The following is an 863-amino-acid chain: MICAL-like protein 1 (863 aa).

The Calponin-homology (CH) domain maps to 2–108 (AGPRGALLAW…YVSQYYNHFC (107 aa)). Disordered regions lie at residues 119 to 162 (RKGL…TPSS) and 224 to 670 (GTRS…PLIK). A compositionally biased stretch (pro residues) spans 125–135 (CSPPSVAPTPV). Composition is skewed to low complexity over residues 143–159 (GEEL…TGQT) and 224–244 (GTRS…HQQQ). The region spanning 162–225 (STCAACQQHV…EHCARLGPGT (64 aa)) is the LIM zinc-binding domain. Phosphoserine occurs at positions 295 and 309. Thr-318 carries the post-translational modification Phosphothreonine. Positions 325–340 (LQQENLVEQAGSSSLV) are enriched in polar residues. The segment covering 384–395 (APLPPSSSPGPP) has biased composition (pro residues). At Ser-391 the chain carries Phosphoserine. Residues 425-427 (NPF) carry the NPF1 motif. Residues 427-438 (FEEEEEDKEEEA) show a composition bias toward acidic residues. Positions 439–450 (PAAPSLATSPAL) are enriched in low complexity. Phosphothreonine is present on residues Thr-467 and Thr-469. Residues Ser-470, Ser-471, Ser-484, and Ser-486 each carry the phosphoserine modification. Composition is skewed to low complexity over residues 482-495 (APSA…ASRL), 505-520 (PSPA…ESAS), and 553-566 (SLST…SGEL). Ser-578 and Ser-621 each carry phosphoserine. An NPF2 motif is present at residues 633-635 (NPF). The span at 638–656 (KPSPAASPATKKATKGSKP) shows a compositional bias: low complexity. The mediates the interaction with RAB13 and RAB35 and intramolecular interaction with the CH domain stretch occupies residues 652–863 (KGSKPVRPPA…AKSKSPRDKS (212 aa)). A bMERB domain is found at 671 to 818 (RKVQADQYIP…EEEEDKMLEA (148 aa)). A coiled-coil region spans residues 682-711 (EDIHGEMDTIERRLDALEHRGVLLEEKLRG). The tract at residues 700 to 863 (HRGVLLEEKL…AKSKSPRDKS (164 aa)) is necessary and sufficient to associate with tubular recycling endosome membranes, mediate phosphatidic acid-binding and membrane tubulation. At Ser-740 the chain carries Phosphoserine. Residues 785–830 (MQELVTLIEQRNAIINCLDEDRQREEEEDKMLEAMIKKKEFQREAE) adopt a coiled-coil conformation.

In terms of assembly, homooligomer. Interacts (via NPF1 motif) with EHD1 (via EH domain); the interaction is direct and probably recruits EHD1 to membranes. Interacts with EHD3 (via EH domain). Interacts with RAB35 (GTP-bound form); the interaction is direct and probably recruits MICALL1 to membranes. Interacts with ACAP2; the interaction is indirect through RAB35. Interacts with RAB8A (GTP-bound form); regulates RAB8A association with recycling endosomes. Interacts with RAB13 (GTP-bound form). Interacts with ARF6 (GTP-bound form). Interacts with PACSIN2 (via the SH3 domain). Interacts with DPYSL2.

Its subcellular location is the recycling endosome membrane. The protein resides in the late endosome membrane. It localises to the cell projection. The protein localises to the cilium membrane. It is found in the cytoplasm. Its subcellular location is the cytoskeleton. The protein resides in the microtubule organizing center. It localises to the centrosome. The protein localises to the centriole. Lipid-binding protein with higher affinity for phosphatidic acid, a lipid enriched in recycling endosome membranes. On endosome membranes, acts as a downstream effector of Rab proteins recruiting cytosolic proteins to regulate membrane tubulation. Involved in a late step of receptor-mediated endocytosis regulating for instance endocytosed-EGF receptor trafficking. Alternatively, regulates slow endocytic recycling of endocytosed proteins back to the plasma membrane. Also involved in cargo protein delivery to the plasma membrane. Plays a role in ciliogenesis coordination, recruits EHD1 to primary cilium where it is anchored to the centriole through interaction with tubulins. May indirectly play a role in neurite outgrowth. This Homo sapiens (Human) protein is MICAL-like protein 1 (MICALL1).